A 727-amino-acid polypeptide reads, in one-letter code: Glycerol-3-phosphate dehydrogenase, mitochondrial (727 aa).

The transit peptide at 1 to 42 (MAFQKAVKGTILVGGGALATVLGLSQFAHYRRKQMNLAYVKA) directs the protein to the mitochondrion. Residue 71–99 (DILVIGGGATGSGCALDAVTRGLKTALVE) coordinates FAD. Y601 carries the post-translational modification Phosphotyrosine. 2 EF-hand domains span residues 623 to 658 (SDIDRYKKRFHKFDADKKGFITIVDVQRVLESINVQ) and 659 to 694 (MDENTLHEILNEVDLNKNGQVELNEFLQLMSAIQKG). 5 residues coordinate Ca(2+): D672, N674, N676, Q678, and E683.

It belongs to the FAD-dependent glycerol-3-phosphate dehydrogenase family. FAD is required as a cofactor.

It localises to the mitochondrion. The enzyme catalyses a quinone + sn-glycerol 3-phosphate = dihydroxyacetone phosphate + a quinol. It functions in the pathway polyol metabolism; glycerol degradation via glycerol kinase pathway; glycerone phosphate from sn-glycerol 3-phosphate (aerobic route): step 1/1. Calcium-binding enhance the activity of the enzyme. In terms of biological role, calcium-responsive mitochondrial glycerol-3-phosphate dehydrogenase which seems to be a key component of the pancreatic beta-cell glucose-sensing device. The protein is Glycerol-3-phosphate dehydrogenase, mitochondrial (GPD2) of Macaca fascicularis (Crab-eating macaque).